Here is an 80-residue protein sequence, read N- to C-terminus: WAP four-disulfide core domain protein 15B (80 aa).

The N-terminal stretch at 1-20 (MKLLGLSLLAVTILLCCNMA) is a signal peptide. The WAP domain occupies 29–76 (VFSKPGYCPEYRVPCPFVLIPKCRRDKGCKDALKCCFFYCQMRCVDPW). 4 disulfide bridges follow: cysteine 36–cysteine 64, cysteine 43–cysteine 68, cysteine 51–cysteine 63, and cysteine 57–cysteine 72.

As to expression, constitutively expressed in kidney and epididymis.

It is found in the secreted. Functionally, antibacterial protein which inhibits the growth of E.coli and S.aureus. The sequence is that of WAP four-disulfide core domain protein 15B (Wfdc15b) from Mus musculus (Mouse).